The sequence spans 413 residues: Serine hydroxymethyltransferase (413 aa).

(6S)-5,6,7,8-tetrahydrofolate-binding positions include leucine 117 and 121-123 (GHL). At lysine 226 the chain carries N6-(pyridoxal phosphate)lysine. Residues glutamate 239 and 349–351 (SPF) each bind (6S)-5,6,7,8-tetrahydrofolate.

The protein belongs to the SHMT family. In terms of assembly, homodimer. It depends on pyridoxal 5'-phosphate as a cofactor.

Its subcellular location is the cytoplasm. The catalysed reaction is (6R)-5,10-methylene-5,6,7,8-tetrahydrofolate + glycine + H2O = (6S)-5,6,7,8-tetrahydrofolate + L-serine. It participates in one-carbon metabolism; tetrahydrofolate interconversion. The protein operates within amino-acid biosynthesis; glycine biosynthesis; glycine from L-serine: step 1/1. Its function is as follows. Catalyzes the reversible interconversion of serine and glycine with tetrahydrofolate (THF) serving as the one-carbon carrier. This reaction serves as the major source of one-carbon groups required for the biosynthesis of purines, thymidylate, methionine, and other important biomolecules. Also exhibits THF-independent aldolase activity toward beta-hydroxyamino acids, producing glycine and aldehydes, via a retro-aldol mechanism. In Bacillus anthracis (strain A0248), this protein is Serine hydroxymethyltransferase.